Reading from the N-terminus, the 251-residue chain is 5'-nucleotidase SurE (251 aa).

Residues Asp-8, Asp-9, Ser-39, and Asn-91 each coordinate a divalent metal cation.

The protein belongs to the SurE nucleotidase family. A divalent metal cation is required as a cofactor.

Its subcellular location is the cytoplasm. The catalysed reaction is a ribonucleoside 5'-phosphate + H2O = a ribonucleoside + phosphate. In terms of biological role, nucleotidase that shows phosphatase activity on nucleoside 5'-monophosphates. The sequence is that of 5'-nucleotidase SurE from Nitrosococcus oceani (strain ATCC 19707 / BCRC 17464 / JCM 30415 / NCIMB 11848 / C-107).